The sequence spans 2271 residues: MSKRQKAFHDSLANEKTRVRLYKSGKNWVKSGIKEIEMFKIMGLPFISHSLVSQDNQSISKKMTGYGLKTTAVIGGAFTVNMLHDQQAFAASDAPLTSELNTQSETVGNQNSTTIEASTSTADSTSVTKNSSSVQTSNSDTVSSEKSEKVTSTTNSTSNQQEKLTSTSESTSSKNTTSSSDTKSVASTSSTEQPINTSTNQSTASNNTSQSTTPSSVNLNKTSTTSTSTAPVKLRTFSRLAMSTFASAATTTAVTANTITVNKDNLKQYMTTSGNATYDQSTGIVTLTQDAYSQKGAITLGTRIDSNKSFHFSGKVNLGNKYEGHGNGGDGIGFAFSPGVLGETGLNGAAVGIGGLSNAFGFKLDTYHNTSKPNSAAKANADPSNVAGGGAFGAFVTTDSYGVATTYTSSSTADNAAKLNVQPTNNTFQDFDINYNGDTKVMTVKYAGQTWTRNISDWIAKSGTTNFSLSMTASTGGATNLQQVQFGTFEYTESAVTQVRYVDVTTGKDIIPPKTYSGNVDQVVTIDNQQSALTAKGYNYTSVDSSYASTYNDTNKTVKMTNAGQSVTYYFTDVKAPTVTVGNQTIEVGKTMNPVVLTTTDNGTGTVTNTVTGLPSGLSYDSATNSIIGTPTKIGQSTVTVVSTDQANNKSTTTFTINVVDTTAPTVTPIGDQSSEVYSPISPIKIATQDNSGNAVTNTVTGLPSGLTFDSTNNTISGTPTNIGTSTISIVSTDASGNKTTTTFKYEVTRNSMSDSVSTSGSTQQSQSVSTSKADSQSASTSTSGSIVVSTSASTSKSTSVSLSDSVSASKSLSTSESNSVSSSTSTSLVNSQSVSSSMSGSVSKSTSLSDSISNSNSTEKSESLSTSTSDSLRTSTSLSDSLSMSTSGSLSKSQSLSTSISGSSSTSASLSDSTSNAISTSTSLSESASTSDSISISNSIANSQSASTSKSDSQSTSISLSTSDSKSMSTSESLSDSTSTSGSVSGSLSIAASQSVSTSTSDSMSTSEIVSDSISTSGSLSASDSKSMSVSSSMSTSQSGSTSESLSDSQSTSDSDSKSLSLSTSQSGSTSTSTSTSASVRTSESQSTSGSMSASQSDSMSISTSFSDSTSDSKSASTASSESISQSASTSTSGSVSTSTSLSTSNSERTSTSVSDSTSLSTSESDSISESTSTSDSISEAISASESTSISLSESNSTSDSESQSASAFLSESLSESTSESTSESVSSSTSESTSLSDSTSESGSTSTSLSNSTSGSASISTSTSISESTSTFKSESVSTSLSMSTSTSLSNSTSLSTSLSDSTSDSKSDSLSTSMSTSDSISTSKSDSISTSTSLSGSTSESESDSTSSSESKSDSTSMSISMSQSTSGSTSTSTSTSLSDSTSTSLSLSASMNQSGVDSNSASQSASNSTSTSTSESDSQSTSTYTSQSTSQSESTSTSTSLSDSTSISKSTSQSGSTSTSASLSGSESESDSQSISTSASESTSESASTSLSDSTSTSNSGSASTSTSLSNSASASESDSSSTSLSDSTSASMQSSESDSQSTSASLSDSLSTSTSNRMSTIASLSTSVSTSESGSTSESTSESDSTSTSLSDSQSTSRSTSASGSASTSTSTSDSRSTSASTSTSMRTSTSDSQSMSLSTSTSTSMSDSTSLSDSVSDSTSDSTSASTSGSMSVSISLSDSTSTSTSASEVMSASISDSQSMSESVNDSESVSESNSESDSKSMSGSTSVSDSGSLSVSTSLRKSESVSESSSLSGSQSMSDSVSTSDSSSLSVSTSLRSSESVSESDSLSDSKSTSGSTSTSTSGSLSTSTSLSGSESVSESTSLSDSISMSDSTSTSDSDSLSGSISLSGSTSLSTSDSLSDSKSLSSSQSMSGSESTSTSVSDSQSSSTSNSQFDSMSISASESDSMSTSDSSNISGSNSTSTSLSTSDSMSGSVSVSTSTSLSDSISGSTSVSDSSSTSTSTSLSDSMSQSQSTSTSASGSLSTSISTSMSMSASTSSSQSTSVSTSLSTSDSISDSTSISISGSQSTVESESTSDSTSISDSESLSTSDSDSTSTSTSDSTSGSTSTSISESLSTSGSGSTSVSDSTSMSESDSTSVSMSQDKSDSTSISDSESVSTSTSTSLSTSDSTSTSESLSTSMSGSQSISDSTSTSMSGSTSTSESNSMHPSDSMSMHHTHSTSTSRLSSEATTSTSESQSTLSATSEVTKHNGTPAQSEKRLPDTGDSIKQNGLLGGVMTLLVGLGLMKRKKKKDENDQDDSQA.

Residues 1-89 (MSKRQKAFHD…VNMLHDQQAF (89 aa)) form the signal peptide. Positions 90–230 (AASDAPLTSE…KTSTTSTSTA (141 aa)) are serine-rich repeat region 1, SRR1. Over residues 100-111 (LNTQSETVGNQN) the composition is skewed to polar residues. Disordered regions lie at residues 100–229 (LNTQ…STST), 751–791 (NSMS…VVST), and 806–2243 (SVSA…GLLG). Low complexity predominate over residues 112 to 128 (STTIEASTSTADSTSVT). Positions 129 to 140 (KNSSSVQTSNSD) are enriched in polar residues. Over residues 150–229 (VTSTTNSTSN…NKTSTTSTST (80 aa)) the composition is skewed to low complexity. The non-repeat region (NRR) stretch occupies residues 231 to 751 (PVKLRTFSRL…TTFKYEVTRN (521 aa)). Composition is skewed to low complexity over residues 752-791 (SMSDSVSTSGSTQQSQSVSTSKADSQSASTSTSGSIVVST), 806-1392 (SVSA…LSLS), and 1402-2214 (SNSA…ATSE). A serine-rich repeat region 2, SRR2 region spans residues 752-2232 (SMSDSVSTSG…AQSEKRLPDT (1481 aa)). An LPXTG sorting signal motif is present at residues 2229 to 2233 (LPDTG). T2232 is subject to Pentaglycyl murein peptidoglycan amidated threonine. Residues 2233-2271 (GDSIKQNGLLGGVMTLLVGLGLMKRKKKKDENDQDDSQA) constitute a propeptide, removed by sortase.

It belongs to the serine-rich repeat protein (SRRP) family. In terms of processing, proteolytically cleaved by a metalloprotease. Post-translationally, glycosylated. It is probable that most of the Ser residues in SSR1 and SSR2 are O-GlcNAcylated. Sequential glycosylation by sugar transferases are able to generate complex sugar polymorphisms.

It is found in the secreted. Its subcellular location is the cell wall. Its function is as follows. Mediates binding to human platelets, possibly through a receptor-ligand interaction. Probably associated with virulence in endovascular infection. The sequence is that of Serine-rich adhesin for platelets (sraP) from Staphylococcus aureus (strain Mu50 / ATCC 700699).